Consider the following 142-residue polypeptide: Large ribosomal subunit protein uL13 (142 aa).

This sequence belongs to the universal ribosomal protein uL13 family. Part of the 50S ribosomal subunit.

Functionally, this protein is one of the early assembly proteins of the 50S ribosomal subunit, although it is not seen to bind rRNA by itself. It is important during the early stages of 50S assembly. In Vibrio atlanticus (strain LGP32) (Vibrio splendidus (strain Mel32)), this protein is Large ribosomal subunit protein uL13.